A 521-amino-acid polypeptide reads, in one-letter code: MRMYYSRLKLASVLGVCLLGLLLCLPNGMRKPFPSIPWRQIHLGLDLRGGSYLLMQVDLKSLTHDRLQTLAENTRDTLLKSQLGYQNINVDADKNTVSFQPRDAAEADTDVATLDKLPRVVPNEFSVKKQDDGTIALVLSADAIKARAREAVTQSIEIVRRRIDGTGAVDPEITRQGDDRIVVELPGISDPERIKALLGTTAKMTFRLVDSNPLHATYPPPGVSLVPMANPAEGGPLPVFDHVDVDGTDLTNAGAVIDQQTGEWAVSFSFDSVGTRAFSSVTQTNVGKRFAIVLDNKVIEAPVIRTPITGGNGQITGGFDAQKATDLALMLRAGALPAPLSVVEQRSIGPSLGADSIRAGILSLGVGFLLVVVFMVLFYGRFGWYADIALLANLVLMVAILSLFEATLTLPGMAGMLLTLGMAVDANILINERIREEVARGRTPLAAMQTGFERATSTIVDSNATAFLAHVMLFVFGTGPVRGFALTITIGIATTLFTTLLLSRMLMARWYARTRPASLPV.

6 helical membrane-spanning segments follow: residues 8–28 (LKLA…LPNG), 359–379 (AGIL…VLFY), 388–408 (IALL…EATL), 410–430 (LPGM…NILI), 459–479 (IVDS…FGTG), and 483–503 (GFAL…LLLS).

The protein belongs to the SecD/SecF family. SecD subfamily. In terms of assembly, forms a complex with SecF. Part of the essential Sec protein translocation apparatus which comprises SecA, SecYEG and auxiliary proteins SecDF-YajC and YidC.

The protein localises to the cell inner membrane. Functionally, part of the Sec protein translocase complex. Interacts with the SecYEG preprotein conducting channel. SecDF uses the proton motive force (PMF) to complete protein translocation after the ATP-dependent function of SecA. This chain is Protein translocase subunit SecD, found in Acetobacter pasteurianus (strain NBRC 105184 / IFO 3283-01).